The following is a 787-amino-acid chain: Endonuclease MutS2 (787 aa).

336 to 343 contributes to the ATP binding site; the sequence is GPNTGGKT. Positions 712–787 constitute a Smr domain; sequence LDLRGVRYED…GNGATEVQFK (76 aa).

Belongs to the DNA mismatch repair MutS family. MutS2 subfamily. In terms of assembly, homodimer. Binds to stalled ribosomes, contacting rRNA.

Functionally, endonuclease that is involved in the suppression of homologous recombination and thus may have a key role in the control of bacterial genetic diversity. Acts as a ribosome collision sensor, splitting the ribosome into its 2 subunits. Detects stalled/collided 70S ribosomes which it binds and splits by an ATP-hydrolysis driven conformational change. Acts upstream of the ribosome quality control system (RQC), a ribosome-associated complex that mediates the extraction of incompletely synthesized nascent chains from stalled ribosomes and their subsequent degradation. Probably generates substrates for RQC. The protein is Endonuclease MutS2 of Lactiplantibacillus plantarum (strain ATCC BAA-793 / NCIMB 8826 / WCFS1) (Lactobacillus plantarum).